We begin with the raw amino-acid sequence, 131 residues long: Lactose permease (131 aa).

The Cytoplasmic segment spans residues 1–13; that stretch reads MKFSELAPRERHN. The helical transmembrane segment at 14–34 threads the bilayer; that stretch reads FVYFLLFFFFYHFIMSAYFPF. Residues 35–50 are Periplasmic-facing; it reads FPVWLADVNHLTKTET. The helical transmembrane segment at 51–71 threads the bilayer; the sequence is GIVFSSISLFAIIFQPVFGLM. At 72-80 the chain is on the cytoplasmic side; it reads SDKLGLRKH. A helical membrane pass occupies residues 81 to 101; the sequence is LLWTITVLLILFAPFFIFVFS. Position 102 (proline 102) is a topological domain, periplasmic. A helical membrane pass occupies residues 103–123; that stretch reads LLQMNIIAGSLVGGIYLGIVF. Residues 124 to 131 lie on the Cytoplasmic side of the membrane; that stretch reads STAPGVGS.

It belongs to the major facilitator superfamily. Oligosaccharide:H(+) symporter (OHS) (TC 2.A.1.5) family.

The protein resides in the cell inner membrane. The catalysed reaction is lactose(in) + H(+)(in) = lactose(out) + H(+)(out). Its function is as follows. Responsible for transport of beta-galactosides into the cell, with the concomitant import of a proton (symport system). In Klebsiella pneumoniae, this protein is Lactose permease (lacY).